Reading from the N-terminus, the 504-residue chain is Histidine ammonia-lyase (504 aa).

Residues 142-144 (ASG) constitute a cross-link (5-imidazolinone (Ala-Gly)). Residue serine 143 is modified to 2,3-didehydroalanine (Ser).

It belongs to the PAL/histidase family. Post-translationally, contains an active site 4-methylidene-imidazol-5-one (MIO), which is formed autocatalytically by cyclization and dehydration of residues Ala-Ser-Gly.

The protein resides in the cytoplasm. It catalyses the reaction L-histidine = trans-urocanate + NH4(+). It functions in the pathway amino-acid degradation; L-histidine degradation into L-glutamate; N-formimidoyl-L-glutamate from L-histidine: step 1/3. The protein is Histidine ammonia-lyase of Staphylococcus aureus (strain USA300).